Here is a 129-residue protein sequence, read N- to C-terminus: MAATASLTTTAPSPPALLKASAPLLISFRPVSRHCKNLCIKTKATENDQSAKKHQKVKSILCQDCEGNGAIVCTKCEGNGVNSVDYFEGRFKAGSLCWLCRGKREILCGNCNGAGFLGGFLSTFDETAQ.

The transit peptide at M1–K43 directs the protein to the chloroplast. The CR-type zinc-finger motif lies at Q49–T123. Zn(2+)-binding residues include C62, C65, N68, C73, C76, C97, C100, E105, C108, and C111.

Belongs to the BSD2 chaperone family. Interacts with the RuBisCo large subunit (RbcL) assembled as an intermediate complex made of eight RbcL and eight BSD2 subunits. Expressed in shoot tissues, in both bundle sheath and mesophyll cells.

It is found in the plastid. It localises to the chloroplast stroma. Chloroplast chaperone required for RuBisCo complex biogenesis and translational regulation of the RuBisCo large subunit (RbcL). Stabilizes an end-state assembly intermediate of eight RbcL subunits until the small subunits (RBCSs) become available to produce a complete stable RuBisCo complex containing eight small and eight large subunits. Involved in the differentiation of bundle sheath cells, especially chloroplast structure. In Zea mays (Maize), this protein is Protein BUNDLE SHEATH DEFECTIVE 2, chloroplastic.